We begin with the raw amino-acid sequence, 352 residues long: Dysbindin (352 aa).

Phosphoserine is present on Ser-11. Positions 88–176 form a coiled coil; sequence EKKRTSLNEL…EAFKAELDTE (89 aa). The tract at residues 173-325 is dysbindin; it reads LDTEHTQKAL…DEEEVQVDTA (153 aa). Positions 243–256 match the Nuclear export signal motif; that stretch reads LMDISDQEALDVFL. The tract at residues 267 to 352 is disordered; it reads SPGVEMESNP…SDQCDSTQDI (86 aa). A compositionally biased stretch (polar residues) spans 274-285; sequence SNPNQNEMSLQI. Positions 286–301 are enriched in low complexity; it reads PSPSESASQPPASPSA. Phosphoserine is present on residues Ser-315, Ser-340, and Ser-343.

It belongs to the dysbindin family. In terms of assembly, interacts with AP3M1 and TRIM32. Interacts (isoform 1 and isoform 2 only) with the DNA-dependent protein kinase complex DNA-PK; the interaction phosphorylates DTNBP1 in vitro. Interacts directly in this complex with XRCC5 and XRCC6. Interacts with XPO1; the interaction exports DTNBP1 out of the nucleus. Component of the biogenesis of lysosome-related organelles complex 1 (BLOC-1) composed of BLOC1S1, BLOC1S2, BLOC1S3, BLOC1S4, BLOC1S5, BLOC1S6, DTNBP1/BLOC1S7 and SNAPIN/BLOC1S8. The BLOC-1 complex associates with the AP-3 protein complex and membrane protein cargos. This BLOC-1 complex also associates with the BLOC-2 complex in endosomes. Binds to DTNA and DTNB but may not be a physiological binding partner. Interacts (via its coiled coil domain) with KXD1. Interacts with AP3B2, BLOC1S5, BLOC1S6, CMYA5, PI4K2, RNF151 and SNAPIN/BLOC1S8. Interacts with XPO1; the interaction exports DTNBP1 out of the nucleus. Ubiquitinated by TRIM32. Ubiquitination leads to DTNBP1 degradation. As to expression, detected in brain, in hippocampus and dentate gyrus neurons. Detected at axon bundles and axon terminals, notably in the cerebellum and hippocampus. Detected in neuropil in hippocampus, lateral septum, basal ganglia and substantia nigra. Highly expressed in pyramidal cells of hippocampus CA2 and CA3. Detected at the heart and skeletal muscle sarcolemma (at protein level). Ubiquitously expressed. The highest expression is observed in testis, liver, kidney, brain, heart and lung. Expressed at lower levels in stomach and small intestine.

Its subcellular location is the cytoplasm. It is found in the cytoplasmic vesicle membrane. The protein localises to the endosome membrane. The protein resides in the melanosome membrane. It localises to the postsynaptic density. Its subcellular location is the endoplasmic reticulum. It is found in the nucleus. The protein localises to the cytoplasmic vesicle. The protein resides in the secretory vesicle. It localises to the synaptic vesicle membrane. Its subcellular location is the postsynaptic cell membrane. Component of the BLOC-1 complex, a complex that is required for normal biogenesis of lysosome-related organelles (LRO), such as platelet dense granules and melanosomes. In concert with the AP-3 complex, the BLOC-1 complex is required to target membrane protein cargos into vesicles assembled at cell bodies for delivery into neurites and nerve terminals. The BLOC-1 complex, in association with SNARE proteins, is also proposed to be involved in neurite extension. Associates with the BLOC-2 complex to facilitate the transport of TYRP1 independent of AP-3 function. Plays a role in synaptic vesicle trafficking and in neurotransmitter release. Plays a role in the regulation of cell surface exposure of DRD2. May play a role in actin cytoskeleton reorganization and neurite outgrowth. May modulate MAPK8 phosphorylation. Appears to promote neuronal transmission and viability through regulating the expression of SNAP25 and SYN1, modulating PI3-kinase-Akt signaling and influencing glutamatergic release. Regulates the expression of SYN1 through binding to its promoter. Modulates prefrontal cortical activity via the dopamine/D2 pathway. The sequence is that of Dysbindin (Dtnbp1) from Mus musculus (Mouse).